A 587-amino-acid chain; its full sequence is Solute carrier family 13 member 2 (587 aa).

4 helical membrane passes run 13-33, 53-73, 86-106, and 136-156; these read FYLIVLCLPIFLLPLPLIVQT, ALPLAVTALFPIVLFPLMGIM, TNILFVGGLMVAIAVEHWNLH, and SMWISNTATTAMMVPIGHAVL. The tract at residues 188–208 is disordered; it reads KLDNGQPVSAPSEPRTQKTQE. The next 8 helical transmembrane spans lie at 264-284, 329-349, 367-387, 407-427, 445-465, 477-497, 506-526, and 535-555; these read FAFPTMIILLLLAWLWLQVLF, VLFVLLVVLWFTREPGFFPGW, TVAIFISLVMFIIPSKIPGLM, TVNDKMPWNIVILLGGGFALA, PLQHIPPSATAVILCLLIAIF, LFLPILASMAQAICLHPLYVM, LAFMLPVATPPNAIVFSFGGL, and GFLLNIIGVLAITLSINSWSI.

The protein belongs to the SLC13A/DASS transporter (TC 2.A.47) family. NADC subfamily. In terms of tissue distribution, expressed in large and small intestine and in the kidney proximal tubules.

It localises to the apical cell membrane. The enzyme catalyses succinate(out) + 3 Na(+)(out) = succinate(in) + 3 Na(+)(in). It catalyses the reaction fumarate(out) + 3 Na(+)(out) = fumarate(in) + 3 Na(+)(in). It carries out the reaction 2-oxoglutarate(out) + 3 Na(+)(out) = 2-oxoglutarate(in) + 3 Na(+)(in). With respect to regulation, li(+) decreases succinate transport in the presence of Na(+), by competing at one of the three cation binding sites. Functionally, low-affinity sodium-dicarboxylate cotransporter, that mediates the entry of citric acid cycle intermediates, such as succinate, citrate, fumarate and alpha-ketoglutarate (2-oxoglutarate) into the small intestine and renal proximal tubule. Transports the dicarboxylate into the cell with a probable stoichiometry of 3 Na(+) for 1 divalent dicarboxylate, rendering the process electrogenic. Citrate is transported in protonated form as a divalent anion, rather than the trivalent form which is normally found in blood. Has a critical role in renal dicarboxylate transport. This chain is Solute carrier family 13 member 2 (Slc13a2), found in Rattus norvegicus (Rat).